A 96-amino-acid chain; its full sequence is uncharacterized protein (96 aa).

The signal sequence occupies residues 1–23 (MKQFYSVVLTIIIYISSQSNVVS). 3 disulfide bridges follow: Cys60–Cys74, Cys67–Cys78, and Cys73–Cys83.

The protein localises to the secreted. This is an uncharacterized protein from Schistosoma japonicum (Blood fluke).